The primary structure comprises 62 residues: uncharacterized protein (62 aa).

This is an uncharacterized protein from Saccharomyces cerevisiae (strain ATCC 204508 / S288c) (Baker's yeast).